The sequence spans 356 residues: Serine/arginine-rich splicing factor RS41 (356 aa).

2 consecutive RRM domains span residues 2-74 and 96-167; these read KPVF…WTKN and KTLF…YAVK. A disordered region spans residues 73 to 92; it reads KNDRGGAGRSGGSRRSSSGL. The span at 168 to 186 shows a compositional bias: basic and acidic residues; sequence DDDSRGNGYSPERRRDRSP. The interval 168-356 is disordered; it reads DDDSRGNGYS…SPSRSPPAEE (189 aa). S192, S194, S210, S239, S254, and S274 each carry phosphoserine. Positions 238–253 are enriched in basic and acidic residues; that stretch reads LSPDYKRDDRRRERVA. Repeat copies occupy residues 267 to 278, 279 to 290, and 291 to 302. Positions 267-307 are 4 X 12 AA tandem repeats of [KE]-[GK]-R -[GR]-E-S-R-S-P-P-P-Y; that stretch reads KGRGESRSPPPYEKRRESRSPPPYEKRRESRSPPPYEKRRE. Residues 268 to 306 are compositionally biased toward basic and acidic residues; sequence GRGESRSPPPYEKRRESRSPPPYEKRRESRSPPPYEKRR. One copy of the 4; truncated repeat lies at 303–307; sequence EKRRE. Phosphoserine occurs at positions 309, 324, 342, 347, and 351.

This sequence belongs to the splicing factor SR family. RS subfamily. In terms of assembly, component of the spliceosome. Interacts with RCF3 and CPL1. Interacts with DRB1/HYL1 and SE. As to expression, leaves, stem, roots and flowers.

It is found in the nucleus. The protein localises to the nucleus speckle. In terms of biological role, required for constitutive and alternative pre-mRNA splicing. Involved in primary miRNA processing and pri-miRNA biogenesis. Binds both intronless and intron-containing pri-miRNAs. The protein is Serine/arginine-rich splicing factor RS41 (RS41) of Arabidopsis thaliana (Mouse-ear cress).